Here is a 73-residue protein sequence, read N- to C-terminus: Methionyl-tRNA formyltransferase (73 aa).

The protein belongs to the Fmt family.

The enzyme catalyses L-methionyl-tRNA(fMet) + (6R)-10-formyltetrahydrofolate = N-formyl-L-methionyl-tRNA(fMet) + (6S)-5,6,7,8-tetrahydrofolate + H(+). In terms of biological role, attaches a formyl group to the free amino group of methionyl-tRNA(fMet). The formyl group appears to play a dual role in the initiator identity of N-formylmethionyl-tRNA by promoting its recognition by IF2 and preventing the misappropriation of this tRNA by the elongation apparatus. The polypeptide is Methionyl-tRNA formyltransferase (fmt) (Rickettsia australis).